The following is an 87-amino-acid chain: Pro-gurmarin (87 aa).

Positions 1–20 (MAKFAAIVLLILVASATVNA) are cleaved as a signal peptide. A propeptide spanning residues 21–52 (VKEHDELPTTGMSRKILLQPVFKSLIISIAEG) is cleaved from the precursor. Glutamine 53 carries the post-translational modification Pyrrolidone carboxylic acid. 3 disulfides stabilise this stretch: cysteine 55/cysteine 70, cysteine 62/cysteine 75, and cysteine 69/cysteine 85.

As to expression, expressed in leaves (at protein level).

In terms of biological role, peptide that strongly, but reversibly, suppresses the sweet taste-response to various sweeteners, including sugars, sweet amino acids and the artificial sweetener saccharin. In rodents, potentially binds to a sweet taste receptor present on apical microvilli of a subset of taste bud cells. Highly effective at blocking the sweet taste-response in rodents such as rats and mice, though mice may possess a mix of gurmarin-sensitive and -insensitive receptors. Has almost no effect on the sweet taste-response in humans. Inhibits Staphylococcus aureus biofilm formation without affecting bacterial viability. May be one of at least 9 different disulfide-rich peptides produced with varying properties. In Gymnema sylvestre (Gurmar), this protein is Pro-gurmarin.